The following is an 844-amino-acid chain: MTEDVKADVPKKLSIQRRTKTTVSGTTTSGKSKAVQVEVRKKRTVKTDIAQQEEAKLKAQQEAEAKKIAEQKAAEEKARLEAEKAATKKEADEKSKAEKAKAETAKPAKSAVDSKAKFVDPEKEKRKAEEAELRRKAEEVARQKAEEQARRAAEEAKRYAEADDSDNESSSEDYSDYNLSSRYALEAEDEEDRRNENRGRGKNKVAKAKKGGRDDENSKNSKNERESNRKNQKDAKFGKGKNGKKGAALQQAFTKPAQVVKSDVVIGETITVAELANKMAVKATEIIKMMMKMGEMVTINQVIDQETAQLVAEELGHKVILRNENELEEAVLGDRDVNAEKVTRAPVVTIMGHVDHGKTSLLDYIRKAKVAAGEAGGITQHIGAYHVEMDDGKMITFLDTPGHAAFTSMRARGAKATDIVVLVVAADDGVMPQTIEAIQHAKAAGAPLVVAVNKIDKPEANPDRVEQELLQHDVISEKFGGDVQFVPVSAKKGTGVDDLLDAILLQSEVLELTAVKDGMASGVVIESYLDKGRGPVATILVQSGTLRKGDIVLCGFEYGRARAMRDENGKEVDEAGPSIPVELLGLSGVPAAGDEATVVRDEKKAREVALYRQGKFREVKLARQQKAKLENMFSNMSEGDVAELNVIVKADVQGSVEAIVQALNELSTNEVKVKVVGSGVGGITETDATLATASNAIIVGFNVRADATARRVIEAENIDLRYYSIIYELLNEIKAAMSGMLEPEFKQEIIGLAEVRDVFRHPKFGAIAGCMVTEGVVKRNNPIRVLRDNVVIFEGELESLRRFKDDVSEVRNGMECGIGVKNYNDVKVGDQIEVFEVVEVKRSI.

Residues 1–11 are compositionally biased toward basic and acidic residues; it reads MTEDVKADVPK. Disordered regions lie at residues 1 to 35 and 79 to 248; these read MTED…SKAV and RLEA…KGAA. Low complexity predominate over residues 21–33; it reads TTVSGTTTSGKSK. A compositionally biased stretch (basic and acidic residues) spans 79 to 161; it reads RLEAEKAATK…AAEEAKRYAE (83 aa). A compositionally biased stretch (acidic residues) spans 162 to 175; it reads ADDSDNESSSEDYS. A compositionally biased stretch (basic residues) spans 200-210; the sequence is RGKNKVAKAKK. Basic and acidic residues predominate over residues 211–237; that stretch reads GGRDDENSKNSKNERESNRKNQKDAKF. The tr-type G domain maps to 343-513; sequence TRAPVVTIMG…LLQSEVLELT (171 aa). The G1 stretch occupies residues 352–359; it reads GHVDHGKT. 352–359 is a GTP binding site; that stretch reads GHVDHGKT. The G2 stretch occupies residues 377 to 381; that stretch reads GITQH. The segment at 399 to 402 is G3; sequence DTPG. Residues 399–403 and 453–456 each bind GTP; these read DTPGH and NKID. A G4 region spans residues 453 to 456; it reads NKID. The G5 stretch occupies residues 489–491; that stretch reads SAK.

Belongs to the TRAFAC class translation factor GTPase superfamily. Classic translation factor GTPase family. IF-2 subfamily.

It is found in the cytoplasm. In terms of biological role, one of the essential components for the initiation of protein synthesis. Protects formylmethionyl-tRNA from spontaneous hydrolysis and promotes its binding to the 30S ribosomal subunits. Also involved in the hydrolysis of GTP during the formation of the 70S ribosomal complex. This chain is Translation initiation factor IF-2, found in Haemophilus influenzae (strain PittGG).